Consider the following 356-residue polypeptide: Putative [LysW]-L-2-aminoadipate/[LysW]-L-glutamate phosphate reductase (356 aa).

NADP(+) is bound at residue 11 to 14; the sequence is SGYT. Cys-157 is an active-site residue. Asn-323 provides a ligand contact to NADP(+).

It belongs to the NAGSA dehydrogenase family. Type 1 subfamily. LysY sub-subfamily.

The protein localises to the cytoplasm. It catalyses the reaction [amino-group carrier protein]-C-terminal-N-(1-carboxy-5-oxopentan-1-yl)-L-glutamine + phosphate + NADP(+) = [amino-group carrier protein]-C-terminal-N-(1-carboxy-5-phosphooxy-5-oxopentan-1-yl)-L-glutamine + NADPH + H(+). It carries out the reaction [amino-group carrier protein]-C-terminal-gamma-(L-glutamyl-5-semialdehyde)-L-glutamate + phosphate + NADP(+) = [amino-group carrier protein]-C-terminal-gamma-(5-phospho-L-glutamyl)-L-glutamate + NADPH + H(+). It functions in the pathway amino-acid biosynthesis; L-lysine biosynthesis via AAA pathway; L-lysine from L-alpha-aminoadipate (Thermus route): step 3/5. Its pathway is amino-acid biosynthesis; L-arginine biosynthesis. Involved in both the arginine and lysine biosynthetic pathways. The protein is Putative [LysW]-L-2-aminoadipate/[LysW]-L-glutamate phosphate reductase of Ignicoccus hospitalis (strain KIN4/I / DSM 18386 / JCM 14125).